We begin with the raw amino-acid sequence, 473 residues long: MKHKIKHIHFVGIGGSGMGGIAEVLINQGFQISGSDLNGNSTTKRLQCLGAVIHHTHAAENIQSADAVVISTAIQPDNPEVIAARERRIPVVPRAMMLAELLRLHQGIAIAGTHGKTTTTSLVASILAEAGQDPTFVIGGRLKTVDSHARLGKGEFIVVEADESDASFLYLQPVLTVVTNIDADHMSTYEHDFNRLKQTFVEFIEHLPFYGMAVLCADDPHVSAIIPMVSKQVTTYGITSENAQIRATDIRHDQCKMHFCAHIGVNGSARTLDITLNLPGKHNVLNALAAIAVGNELNIPDEAMVKALATFGGVDRRFQQYGEIRLPDRRSFTLIDDYGHHPAEIAATMAAARNAFPGRRLVLVFQPHRYSRTRDLFEDFVRVLSSADALLLTEIYSAGEEPIIAADSKSLVRAIRVQGKIEPIYIEHINELKSAVHTVVQEGDVVLIMGAGSIGKIAPGLAEPTMKLTLITG.

112 to 118 (GTHGKTT) provides a ligand contact to ATP.

Belongs to the MurCDEF family.

The protein resides in the cytoplasm. The enzyme catalyses UDP-N-acetyl-alpha-D-muramate + L-alanine + ATP = UDP-N-acetyl-alpha-D-muramoyl-L-alanine + ADP + phosphate + H(+). It participates in cell wall biogenesis; peptidoglycan biosynthesis. Functionally, cell wall formation. The protein is UDP-N-acetylmuramate--L-alanine ligase of Nitrosomonas eutropha (strain DSM 101675 / C91 / Nm57).